The sequence spans 339 residues: DNA-directed RNA polymerase RPB7 homolog (339 aa).

It belongs to the Asfivirus DNA-directed RNA polymerase RPB7 homolog family. In terms of assembly, part of the viral DNA-directed RNA polymerase that consists of 8 polII-like subunits (RPB1, RPB2, RPB3, RPB5, RPB6, RPB7, RPB9, RPB10), a capping enzyme and a termination factor.

Its subcellular location is the host cytoplasm. The protein resides in the virion. Functionally, component of the DNA-directed RNA polymerase (RNAP) that catalyzes the transcription in the cytoplasm of viral DNA into RNA using the four ribonucleoside triphosphates as substrates. This chain is DNA-directed RNA polymerase RPB7 homolog, found in Ornithodoros (relapsing fever ticks).